Consider the following 459-residue polypeptide: Phosphomethylpyrimidine synthase (459 aa).

Substrate contacts are provided by residues asparagine 81, methionine 110, tyrosine 140, histidine 176, 196–198 (SRG), 237–240 (DSLR), and glutamate 276. Histidine 280 is a Zn(2+) binding site. Position 303 (tyrosine 303) interacts with substrate. A Zn(2+)-binding site is contributed by histidine 344. [4Fe-4S] cluster is bound by residues cysteine 424, cysteine 427, and cysteine 432.

The protein belongs to the ThiC family. [4Fe-4S] cluster serves as cofactor.

The enzyme catalyses 5-amino-1-(5-phospho-beta-D-ribosyl)imidazole + S-adenosyl-L-methionine = 4-amino-2-methyl-5-(phosphooxymethyl)pyrimidine + CO + 5'-deoxyadenosine + formate + L-methionine + 3 H(+). The protein operates within cofactor biosynthesis; thiamine diphosphate biosynthesis. In terms of biological role, catalyzes the synthesis of the hydroxymethylpyrimidine phosphate (HMP-P) moiety of thiamine from aminoimidazole ribotide (AIR) in a radical S-adenosyl-L-methionine (SAM)-dependent reaction. This is Phosphomethylpyrimidine synthase from Gloeobacter violaceus (strain ATCC 29082 / PCC 7421).